Here is a 101-residue protein sequence, read N- to C-terminus: Small ribosomal subunit protein uS14 (101 aa).

The protein belongs to the universal ribosomal protein uS14 family. In terms of assembly, part of the 30S ribosomal subunit. Contacts proteins S3 and S10.

Functionally, binds 16S rRNA, required for the assembly of 30S particles and may also be responsible for determining the conformation of the 16S rRNA at the A site. The sequence is that of Small ribosomal subunit protein uS14 from Francisella philomiragia subsp. philomiragia (strain ATCC 25017 / CCUG 19701 / FSC 153 / O#319-036).